The primary structure comprises 467 residues: Variant surface glycoprotein 7 (467 aa).

A compositionally biased stretch (polar residues) spans 77-87 (TIAAGATNTKL). The interval 77–133 (TIAAGATNTKLSGHHPNQGRRGRRRSSSARPNNSKGNSPSKRAGGAVRGETPASGRL) is disordered. Residues 93 to 103 (NQGRRGRRRSS) are compositionally biased toward basic residues. Residues 107 to 116 (PNNSKGNSPS) show a composition bias toward polar residues. N-linked (GlcNAc...) asparagine glycosylation is found at asparagine 108 and asparagine 252. Residues 382 to 407 (AEKVENPRSQGNPETAENKKEGGNTA) form a disordered region. The N-linked (GlcNAc...) asparagine glycan is linked to asparagine 416. The GPI-anchor amidated aspartate moiety is linked to residue aspartate 444. The propeptide at 445–467 (SSFLLSKQFALSVVSAAFAALLF) is removed in mature form.

It is found in the cell membrane. Its function is as follows. VSG forms a coat on the surface of the parasite. The trypanosome evades the immune response of the host by expressing a series of antigenically distinct VSGs from an estimated 1000 VSG genes. The sequence is that of Variant surface glycoprotein 7 from Trypanosoma brucei rhodesiense.